The primary structure comprises 381 residues: Protein RecA (381 aa).

79–86 contributes to the ATP binding site; the sequence is GPESSGKT.

This sequence belongs to the RecA family.

It localises to the cytoplasm. Can catalyze the hydrolysis of ATP in the presence of single-stranded DNA, the ATP-dependent uptake of single-stranded DNA by duplex DNA, and the ATP-dependent hybridization of homologous single-stranded DNAs. It interacts with LexA causing its activation and leading to its autocatalytic cleavage. This is Protein RecA from Streptococcus parasanguinis.